The primary structure comprises 894 residues: Transcriptional activator/repressor GIS1 (894 aa).

In terms of domain architecture, JmjN spans 12-53; it reads VPVFKPSMMEFANFQYFIDEITKFGIENGIVKVIPPKEWLEL. S70 is subject to Phosphoserine. Positions 90–110 form a coiled coil; it reads ENEYDNKSYNLTQWKNLAESL. A JmjC domain is found at 170-324; sequence PYDLTLWNLN…VRKQPLKCGC (155 aa). The Bipartite nuclear localization signal signature appears at 316–332; sequence RKQPLKCGCGNKKEERK. The disordered stretch occupies residues 324-355; sequence CGNKKEERKSGPFSNLSYDSNESEQRGSITDN. The span at 335 to 354 shows a compositional bias: polar residues; the sequence is PFSNLSYDSNESEQRGSITD. Position 343 is a phosphoserine (S343). Positions 361-385 form a coiled coil; that stretch reads QKVRSFDELLNHSSQELQNLEDNKN. A compositionally biased stretch (low complexity) spans 521–554; the sequence is NISSTNNSANNSSSNNNVSTVPSSMMHSSTLNGT. A disordered region spans residues 521–558; sequence NISSTNNSANNSSSNNNVSTVPSSMMHSSTLNGTSGLG. 5 positions are modified to phosphoserine: S690, S694, S696, S734, and S747. Positions 756 to 768 are enriched in low complexity; the sequence is LNGNDNSNLDSNN. Residues 756-810 form a disordered region; that stretch reads LNGNDNSNLDSNNFDYSFTGNKQESNPSILNNNTNNNDNYRTSSMNNNGNNYQAH. Polar residues-rich tracts occupy residues 769–785 and 795–810; these read FDYS…PSIL and YRTS…YQAH. A C2H2-type 1 zinc finger spans residues 828 to 851; the sequence is YICRECNRQFSSGHHLTRHKKSVH. The C2H2-type 2; atypical zinc-finger motif lies at 857–882; the sequence is HSCPRCGKRFKRRDHVLQHLNKKIPC.

The protein localises to the nucleus. In terms of biological role, transcription factor involved in the regulation of gene expression upon nutrient starvation. Recognizes and binds to the post-diauxic-shift element 5'-T[AT]AGGGAT-3' in the promoter region. Can act as a transcriptional activator (e.g. of stress genes like SSA3, HSP12 and HSP26) as well as a repressor (e.g. of pyrophosphate phosphatase DPP1). GIS1 also acts as a DNA damage-responsive transcriptional repressor of photolyase PHR1. The chain is Transcriptional activator/repressor GIS1 (GIS1) from Saccharomyces cerevisiae (strain ATCC 204508 / S288c) (Baker's yeast).